The primary structure comprises 220 residues: Small ribosomal subunit protein mS23 (220 aa).

Belongs to the mitochondrion-specific ribosomal protein mS23 family. In terms of assembly, component of the mitochondrial small ribosomal subunit (mt-SSU). Mature yeast 74S mitochondrial ribosomes consist of a small (37S) and a large (54S) subunit. The 37S small subunit contains a 15S ribosomal RNA (15S mt-rRNA) and at least 32 different proteins. The 54S large subunit contains a 21S rRNA (21S mt-rRNA) and at least 45 different proteins.

It localises to the mitochondrion. Functionally, component of the mitochondrial ribosome (mitoribosome), a dedicated translation machinery responsible for the synthesis of mitochondrial genome-encoded proteins, including at least some of the essential transmembrane subunits of the mitochondrial respiratory chain. The mitoribosomes are attached to the mitochondrial inner membrane and translation products are cotranslationally integrated into the membrane. This is Small ribosomal subunit protein mS23 (rsm25) from Schizosaccharomyces pombe (strain 972 / ATCC 24843) (Fission yeast).